The primary structure comprises 304 residues: MPIKIPIELPAFQVLSDENIFVMNNERANTQDIRPLKIAILNLMPKKIVTENQLLRYLSNTPLQVEVSLIQTKSYTSHNTPPEHLNKFYSYFDDIKQEKFDGLIITGAPVEQMAFEEVTYWKELTEIMEWSKTHVFSTFYICWGAQAGLYYHYDIPKYDLDEKMFGVFSHWVNDEKADLTRGLDDVFYAPHSRHTEVKREDIEKVSNLEILSESEEAGVFIVATKDRRNVFVTGHMEYDRNTLMDEYIRDKEKGDEIALPKNYFRNDDINQKPLYTWRGPASIVFGNWLNYCVYQNTPFDLNTL.

Cys142 functions as the Acyl-thioester intermediate in the catalytic mechanism. The substrate site is built by Lys163 and Ser192. The active-site Proton acceptor is His235. Glu237 is a catalytic residue. Arg249 is a binding site for substrate.

The protein belongs to the MetA family.

It localises to the cytoplasm. It carries out the reaction L-homoserine + acetyl-CoA = O-acetyl-L-homoserine + CoA. Its pathway is amino-acid biosynthesis; L-methionine biosynthesis via de novo pathway; O-acetyl-L-homoserine from L-homoserine: step 1/1. Transfers an acetyl group from acetyl-CoA to L-homoserine, forming acetyl-L-homoserine. This is Homoserine O-acetyltransferase from Clostridium beijerinckii (strain ATCC 51743 / NCIMB 8052) (Clostridium acetobutylicum).